Reading from the N-terminus, the 169-residue chain is Secreted LysM effector Blys5 (169 aa).

Residues 1–19 (MKLSVISAVFVSLAAAAAA) form the signal peptide. LysM domains follow at residues 47–94 (TYYQ…YYCV) and 121–167 (QWYK…NVCV).

The protein belongs to the secreted LysM effector family.

Functionally, secreted effector that enables the plant pathogenic fungus to manipulate host defenses for successful infection. Required for the full virulence to infect insect hosts. Protects fungal hyphae against the hydrolytic activity of chitinase and plays an important role in evasion of insect immunities. Binds chitin and can additionally bind chitosan and cellulose. Coats and protects the cell walls of insect pathogens from host cell recognition and additionally shields fungal cells from the hydrolysis of insect chitinases. The chain is Secreted LysM effector Blys5 from Beauveria bassiana (strain ARSEF 2860) (White muscardine disease fungus).